Reading from the N-terminus, the 529-residue chain is Peptide chain release factor 3 (529 aa).

In terms of domain architecture, tr-type G spans 11–280; sequence AKRRTFAIIS…GLVAWAPAPM (270 aa). Residues 20–27, 88–92, and 142–145 each bind GTP; these read SHPDAGKT, DTPGH, and NKLD.

The protein belongs to the TRAFAC class translation factor GTPase superfamily. Classic translation factor GTPase family. PrfC subfamily.

The protein localises to the cytoplasm. Increases the formation of ribosomal termination complexes and stimulates activities of RF-1 and RF-2. It binds guanine nucleotides and has strong preference for UGA stop codons. It may interact directly with the ribosome. The stimulation of RF-1 and RF-2 is significantly reduced by GTP and GDP, but not by GMP. This chain is Peptide chain release factor 3, found in Salmonella gallinarum (strain 287/91 / NCTC 13346).